The primary structure comprises 190 residues: Surfactant protein C (190 aa).

The propeptide occupies 1–24 (MDVGSKEVLMESPPDYTAVPGGRL). Residues cysteine 28 and cysteine 29 are each lipidated (S-palmitoyl cysteine). Residues 59–190 (HMSQKHTEMV…LCGEVPLYYT (132 aa)) constitute a propeptide that is removed on maturation. In terms of domain architecture, BRICHOS spans 94–190 (FSIGSTGTVV…LCGEVPLYYT (97 aa)). Residues cysteine 121 and cysteine 182 are joined by a disulfide bond.

It localises to the secreted. Its subcellular location is the extracellular space. The protein localises to the surface film. Pulmonary surfactant associated proteins promote alveolar stability by lowering the surface tension at the air-liquid interface in the peripheral air spaces. This is Surfactant protein C (SFTPC) from Bos taurus (Bovine).